The primary structure comprises 183 residues: Oligoribonuclease (183 aa).

Residues 9-172 (LIWIDLEMTG…DDIRESIEEL (164 aa)) enclose the Exonuclease domain. The active site involves tyrosine 130.

It belongs to the oligoribonuclease family.

It is found in the cytoplasm. 3'-to-5' exoribonuclease specific for small oligoribonucleotides. The sequence is that of Oligoribonuclease from Haemophilus ducreyi (strain 35000HP / ATCC 700724).